We begin with the raw amino-acid sequence, 130 residues long: Interferon alpha-inducible protein 27-like protein 2 (130 aa).

3 consecutive transmembrane segments (helical) span residues 8–28, 43–63, and 66–86; these read AAVG…AMGF, MSAA…VATL, and VGAA…GSVL. Positions 93–130 are disordered; sequence SPSSSLPAEPEAKEDEARENVPQGEPPKPPLKSEKHEE.

This sequence belongs to the IFI6/IFI27 family.

Its subcellular location is the mitochondrion membrane. Its function is as follows. Plays a role in the apoptotic process and has a pro-apoptotic activity. In Homo sapiens (Human), this protein is Interferon alpha-inducible protein 27-like protein 2.